A 932-amino-acid polypeptide reads, in one-letter code: Protein translocase subunit SecA (932 aa).

ATP contacts are provided by residues Q83, 101–105 (GEGKT), and D491.

Belongs to the SecA family. Monomer and homodimer. Part of the essential Sec protein translocation apparatus which comprises SecA, SecYEG and auxiliary proteins SecDF. Other proteins may also be involved.

It localises to the cell inner membrane. Its subcellular location is the cellular thylakoid membrane. The protein localises to the cytoplasm. The enzyme catalyses ATP + H2O + cellular proteinSide 1 = ADP + phosphate + cellular proteinSide 2.. Functionally, part of the Sec protein translocase complex. Interacts with the SecYEG preprotein conducting channel. Has a central role in coupling the hydrolysis of ATP to the transfer of proteins into and across the cell membrane, serving as an ATP-driven molecular motor driving the stepwise translocation of polypeptide chains across the membrane. Probably participates in protein translocation into and across both the cytoplasmic and thylakoid membranes in cyanobacterial cells. The chain is Protein translocase subunit SecA from Cyanothece sp. (strain PCC 7425 / ATCC 29141).